We begin with the raw amino-acid sequence, 831 residues long: AdoMet-dependent rRNA methyltransferase SPB1 (831 aa).

The S-adenosyl-L-methionine site is built by Gly58, Trp60, Asp78, Asp94, and Asp119. Lys159 serves as the catalytic Proton acceptor. Coiled-coil stretches lie at residues 346-389 (LTED…QMNM) and 440-479 (NDIN…ERDA). Disordered stretches follow at residues 492-535 (DEGW…ADQR) and 565-645 (MNKK…DQQS). Basic and acidic residues predominate over residues 499–510 (ESDKEGSDKETE). 3 stretches are compositionally biased toward acidic residues: residues 511–526 (ANDY…DDDE), 594–611 (MEVD…DSDF), and 618–631 (PDEE…DNEN). A compositionally biased stretch (basic and acidic residues) spans 632-645 (DVSRKYSKAKDQQS). A coiled-coil region spans residues 729–782 (LEAQGRKKLRALKRLEKLKKKSDMINEDSAKSERDKADEIQKLMKKLTKKQKTK).

Belongs to the class I-like SAM-binding methyltransferase superfamily. RNA methyltransferase RlmE family. SPB1 subfamily. In terms of assembly, component of the nucleolar and nucleoplasmic pre-60S ribosomal particle.

The protein resides in the nucleus. It is found in the nucleolus. The enzyme catalyses a ribonucleotide in rRNA + S-adenosyl-L-methionine = a 2'-O-methylribonucleotide in rRNA + S-adenosyl-L-homocysteine + H(+). Its function is as follows. Required for proper assembly of pre-ribosomal particles during the biogenesis of the 60S ribosomal subunit. In Debaryomyces hansenii (strain ATCC 36239 / CBS 767 / BCRC 21394 / JCM 1990 / NBRC 0083 / IGC 2968) (Yeast), this protein is AdoMet-dependent rRNA methyltransferase SPB1.